The sequence spans 341 residues: MKIRLENVVKTFDTFRAVRDVSLDIESGELLALLGPSGSGKTTILRMVAGLEYSDGGRIFFGDEDATNIPVRDRGVGFVFQHYALFPHMTLHENIAFGMKVSKVKRDKAAIDARVKELLNLVKLDGLGDRFPAQISGGQRQRVALARALSVDPKVLLLDEPFGALDANVRRDLRRWLREIHDSLGITTIFVTHDQEEALDLADRVVILNQGGIVQQGTPKEVCRQPNSSFVMRFLGDANRVSGVARGGKVYVGENELPFSYTQGDGAVDIYARPGDLEWEDLHEGIPASVERVLDRAGERRVIASTDGGDILEFDVPPENDVTAGDRGSVIIRRAKIFPVA.

An ABC transporter domain is found at Ile-3–Leu-235. Gly-35–Thr-42 is an ATP binding site.

The protein belongs to the ABC transporter superfamily. Sulfate/tungstate importer (TC 3.A.1.6) family. In terms of assembly, the complex is composed of two ATP-binding proteins (CysA), two transmembrane proteins (CysT and CysW) and a solute-binding protein (CysP).

The protein resides in the cell inner membrane. The enzyme catalyses sulfate(out) + ATP + H2O = sulfate(in) + ADP + phosphate + H(+). It catalyses the reaction thiosulfate(out) + ATP + H2O = thiosulfate(in) + ADP + phosphate + H(+). In terms of biological role, part of the ABC transporter complex CysAWTP involved in sulfate/thiosulfate import. Responsible for energy coupling to the transport system. This is Sulfate/thiosulfate import ATP-binding protein CysA 2 from Agrobacterium fabrum (strain C58 / ATCC 33970) (Agrobacterium tumefaciens (strain C58)).